A 307-amino-acid polypeptide reads, in one-letter code: sn-1-specific diacylglycerol lipase ABHD11 (307 aa).

Residues 1–34 (MLRWARAWRVPRGVLGASSPRRLAVPVTFCSSRS) constitute a mitochondrion transit peptide. An N6-succinyllysine modification is found at K79. S133 serves as the catalytic Charge relay system. At K196 the chain carries N6-succinyllysine. Catalysis depends on charge relay system residues D229 and H288.

Belongs to the AB hydrolase superfamily. Interacts with OGDH and DLST; this interaction maintains the functional lipoylation of the 2-oxoglutarate dehydrogenase complex. In terms of processing, phosphorylated. In terms of tissue distribution, expressed in white adipose tissues.

It is found in the mitochondrion. The protein localises to the mitochondrion matrix. It catalyses the reaction 1-octadecanoyl-2-(5Z,8Z,11Z,14Z-eicosatetraenoyl)-sn-glycerol + H2O = 2-(5Z,8Z,11Z,14Z-eicosatetraenoyl)-glycerol + octadecanoate + H(+). The catalysed reaction is a 1,2-diacyl-sn-glycerol + H2O = a 2-acylglycerol + a fatty acid + H(+). It carries out the reaction a 1,3-diacyl-sn-glycerol + H2O = a 1-acyl-sn-glycerol + a fatty acid + H(+). The enzyme catalyses 1-octadecanoyl-2-(9Z-octadecenoyl)-sn-glycerol + H2O = 2-(9Z-octadecenoyl)-glycerol + octadecanoate + H(+). It catalyses the reaction 1-octadecanoyl-2-(4Z,7Z,10Z,13Z,16Z,19Z-docosahexaenoyl)-sn-glycerol + H2O = 2-(4Z,7Z,10Z,13Z,16Z,19Z-docosahexaenoyl)-glycerol + octadecanoate + H(+). The catalysed reaction is 1,2-didecanoylglycerol + H2O = decanoylglycerol + decanoate + H(+). Its function is as follows. Catalyzes the hydrolysis of diacylglycerol in vitro and may function as a key regulator in lipid metabolism, namely by regulating the intracellular levels of diacylglycerol. 1,2-diacyl-sn-glycerols are the preferred substrate over 1,3-diacyl-sn-glycerols. The enzyme hydrolyzes stearate in preference to palmitate from the sn-1 position of 1,2-diacyl-sn-glycerols. Maintains the functional lipoylation of the 2-oxoglutarate dehydrogenase complex (OGDHc) through its interaction with the OGDHc by preventing the formation of lipoyl adducts. In addition, is also required for the expansion and differentiation of embryonic stem cells (ESCs). The sequence is that of sn-1-specific diacylglycerol lipase ABHD11 from Mus musculus (Mouse).